Consider the following 430-residue polypeptide: Shufflon protein A' (430 aa).

Residues 1-361 (MKKYDRGWAS…TGAILSCQSG (361 aa)) form a constant region region. Residues 362–430 (TWGTIGGKLK…GCIASCVTLN (69 aa)) are variable region.

The sequence is that of Shufflon protein A' from Escherichia coli.